The chain runs to 84 residues: RNA-binding protein Hfq (84 aa).

Residues 10 to 69 (DPFLNILRKERIPVSIYLVNGIKLQGQIDSFDQYVVLLKNSVTQMVYKHAISTIVPAKAI) enclose the Sm domain.

This sequence belongs to the Hfq family. Homohexamer.

In terms of biological role, RNA chaperone that binds small regulatory RNA (sRNAs) and mRNAs to facilitate mRNA translational regulation in response to envelope stress, environmental stress and changes in metabolite concentrations. Also binds with high specificity to tRNAs. The sequence is that of RNA-binding protein Hfq from Nitrosomonas europaea (strain ATCC 19718 / CIP 103999 / KCTC 2705 / NBRC 14298).